A 429-amino-acid chain; its full sequence is Histidine--tRNA ligase (429 aa).

It belongs to the class-II aminoacyl-tRNA synthetase family. Homodimer.

The protein localises to the cytoplasm. It carries out the reaction tRNA(His) + L-histidine + ATP = L-histidyl-tRNA(His) + AMP + diphosphate + H(+). This chain is Histidine--tRNA ligase, found in Streptococcus pneumoniae (strain JJA).